A 466-amino-acid polypeptide reads, in one-letter code: tRNA-2-methylthio-N(6)-dimethylallyladenosine synthase (466 aa).

In terms of domain architecture, MTTase N-terminal spans 5–125 (RKLHIKSYGC…LPELLARAGR (121 aa)). The [4Fe-4S] cluster site is built by Cys14, Cys50, Cys88, Cys166, Cys170, and Cys173. One can recognise a Radical SAM core domain in the interval 152 to 384 (RARGVSAFVT…QSLIDSQQAA (233 aa)). One can recognise a TRAM domain in the interval 387–449 (KAAIGTVVDV…RYSLLGELVA (63 aa)).

The protein belongs to the methylthiotransferase family. MiaB subfamily. Monomer. It depends on [4Fe-4S] cluster as a cofactor.

It localises to the cytoplasm. The catalysed reaction is N(6)-dimethylallyladenosine(37) in tRNA + (sulfur carrier)-SH + AH2 + 2 S-adenosyl-L-methionine = 2-methylsulfanyl-N(6)-dimethylallyladenosine(37) in tRNA + (sulfur carrier)-H + 5'-deoxyadenosine + L-methionine + A + S-adenosyl-L-homocysteine + 2 H(+). Functionally, catalyzes the methylthiolation of N6-(dimethylallyl)adenosine (i(6)A), leading to the formation of 2-methylthio-N6-(dimethylallyl)adenosine (ms(2)i(6)A) at position 37 in tRNAs that read codons beginning with uridine. The sequence is that of tRNA-2-methylthio-N(6)-dimethylallyladenosine synthase from Bradyrhizobium sp. (strain BTAi1 / ATCC BAA-1182).